The sequence spans 178 residues: Matrix-remodeling-associated protein 7 (178 aa).

A helical membrane pass occupies residues 7–27 (LLAALPALVTALALLLAWLLL). Residues 33–121 (RVPAPESTAS…AFSFKYSPGQ (89 aa)) form a disordered region. Positions 48–65 (APAPPEPPESCAPEPAPE) are enriched in pro residues. The segment covering 76–85 (PEESEAEEPA) has biased composition (acidic residues). Phosphoserine occurs at positions 79 and 165.

The protein localises to the membrane. The protein is Matrix-remodeling-associated protein 7 (Mxra7) of Mus musculus (Mouse).